We begin with the raw amino-acid sequence, 439 residues long: Microfibrillar-associated protein 1A (439 aa).

The tract at residues 1 to 200 is disordered; the sequence is MSVPSALMKQ…SEDEMEPRLK (200 aa). Serine 2 is modified (N-acetylserine). Positions 23–34 are enriched in basic and acidic residues; sequence RNEKGEISMEKV. Phosphoserine is present on residues serine 52 and serine 53. Residues 61-70 are compositionally biased toward basic and acidic residues; that stretch reads QFIKKAKEQE. A Glycyl lysine isopeptide (Lys-Gly) (interchain with G-Cter in SUMO2) cross-link involves residue lysine 67. The segment covering 71 to 81 has biased composition (acidic residues); sequence AEPEEQEEDSS. 5 positions are modified to phosphoserine: serine 94, serine 116, serine 118, serine 132, and serine 133. 2 stretches are compositionally biased toward acidic residues: residues 112–122 and 131–144; these read VVGESDSEVEG and DSSE…DDEE. The span at 145–163 shows a compositional bias: basic and acidic residues; that stretch reads IERRRGMMRQRAQERKNEE. Residues 178–195 are compositionally biased toward acidic residues; that stretch reads ESESESEYEEYTDSEDEM. Lysine 249 participates in a covalent cross-link: Glycyl lysine isopeptide (Lys-Gly) (interchain with G-Cter in SUMO2). Threonine 267 carries the phosphothreonine modification. Lysine 357 is covalently cross-linked (Glycyl lysine isopeptide (Lys-Gly) (interchain with G-Cter in SUMO2)). Residue serine 361 is modified to Phosphoserine. Glycyl lysine isopeptide (Lys-Gly) (interchain with G-Cter in SUMO2) cross-links involve residues lysine 371, lysine 381, lysine 415, and lysine 418. Serine 432 carries the phosphoserine modification.

It belongs to the MFAP1 family. Component of the spliceosome B complex. Interacts with PRPF38A (via N-terminal interaction domain).

The protein localises to the nucleus. Involved in pre-mRNA splicing as a component of the spliceosome. The sequence is that of Microfibrillar-associated protein 1A from Mus musculus (Mouse).